The following is a 91-amino-acid chain: YcgL domain-containing protein ESA_01460 (91 aa).

A YcgL domain is found at 1–85 (MFCVIYRSAR…PPENLLKQHL (85 aa)).

The protein is YcgL domain-containing protein ESA_01460 of Cronobacter sakazakii (strain ATCC BAA-894) (Enterobacter sakazakii).